The sequence spans 398 residues: Acetate kinase (398 aa).

N7 is a binding site for Mg(2+). K14 provides a ligand contact to ATP. Residue R91 coordinates substrate. D148 functions as the Proton donor/acceptor in the catalytic mechanism. Residues 208–212, 283–285, and 331–335 each bind ATP; these read HIGNG, DMR, and GVGEN. E385 contacts Mg(2+).

This sequence belongs to the acetokinase family. Homodimer. The cofactor is Mg(2+). Mn(2+) serves as cofactor.

The protein localises to the cytoplasm. The catalysed reaction is acetate + ATP = acetyl phosphate + ADP. It participates in metabolic intermediate biosynthesis; acetyl-CoA biosynthesis; acetyl-CoA from acetate: step 1/2. In terms of biological role, catalyzes the formation of acetyl phosphate from acetate and ATP. Can also catalyze the reverse reaction. In Porphyromonas gingivalis (strain ATCC BAA-308 / W83), this protein is Acetate kinase.